The primary structure comprises 529 residues: T-complex protein 1 subunit beta (529 aa).

The protein belongs to the TCP-1 chaperonin family. In terms of assembly, heterooligomeric complex of about 850 to 900 kDa that forms two stacked rings, 12 to 16 nm in diameter.

It localises to the cytoplasm. In terms of biological role, molecular chaperone; assists the folding of proteins upon ATP hydrolysis. Known to play a role, in vitro, in the folding of actin and tubulin. The sequence is that of T-complex protein 1 subunit beta (cct-2) from Caenorhabditis elegans.